Reading from the N-terminus, the 581-residue chain is Tetratricopeptide repeat and J domain-containing co-chaperone DNJ1 (581 aa).

The first 19 residues, 1 to 19 (MKATLLPSLLALSLTLCLA), serve as a signal peptide directing secretion. 7 TPR repeats span residues 48 to 81 (ASQH…DPSS), 82 to 115 (WLTY…NPKF), 116 to 149 (DKAY…RAEK), 221 to 254 (LETR…TPSP), 257 to 293 (LRRL…DPDN), 378 to 411 (LELH…DPDN), and 412 to 445 (VEAT…SGRT). Asparagine 293 carries an N-linked (GlcNAc...) asparagine glycan. In terms of domain architecture, J spans 467 to 528 (DYYKVLGVKR…ELRKKYDQGD (62 aa)). The disordered stretch occupies residues 522 to 544 (KKYDQGDDPNDPMGGQQGGYGNP).

In terms of assembly, interacts with the ER chaperone BIP1.

It localises to the endoplasmic reticulum lumen. In terms of biological role, endoplasmic reticulum (ER) protein that functions as a co-chaperone for BIP1 during ER stress. Might be specifically involved in the refolding of N-glycosylated proteins. In Mycosarcoma maydis (Corn smut fungus), this protein is Tetratricopeptide repeat and J domain-containing co-chaperone DNJ1.